The primary structure comprises 309 residues: THAP domain-containing protein 7 (309 aa).

A THAP-type zinc finger spans residues Met-1 to Phe-93. The interval Thr-158–Val-209 is disordered. Ser-162 is modified (phosphoserine). Residues Glu-198–Val-209 are compositionally biased toward pro residues. Ser-210 carries the phosphoserine modification. An HCFC1-binding motif (HBM) motif is present at residues Glu-229–Tyr-232.

As to quaternary structure, forms homodimers. Interacts with HDAC3 and nuclear hormone receptor corepressors. Interacts via HBM with HCFC1.

It localises to the nucleus. The protein localises to the chromosome. Functionally, chromatin-associated, histone tail-binding protein that represses transcription via recruitment of HDAC3 and nuclear hormone receptor corepressors. In Homo sapiens (Human), this protein is THAP domain-containing protein 7 (THAP7).